The following is a 181-amino-acid chain: UPF0397 protein str0306 (181 aa).

5 helical membrane-spanning segments follow: residues 11–31 (ATGI…IPIF), 45–65 (LFSV…GHAL), 72–92 (GNIS…IGLF), 109–129 (IWFN…VTPI), and 147–167 (FVAG…LLAI).

Belongs to the UPF0397 family.

It is found in the cell membrane. The protein is UPF0397 protein str0306 of Streptococcus thermophilus (strain CNRZ 1066).